The primary structure comprises 363 residues: Spermidine/putrescine import ATP-binding protein PotA (363 aa).

In terms of domain architecture, ABC transporter spans 5 to 236 (IKLKHVRKEY…PVNDFVARFI (232 aa)). Position 38–45 (38–45 (GPSGSGKT)) interacts with ATP.

It belongs to the ABC transporter superfamily. Spermidine/putrescine importer (TC 3.A.1.11.1) family. As to quaternary structure, the complex is composed of two ATP-binding proteins (PotA), two transmembrane proteins (PotB and PotC) and a solute-binding protein (PotD).

It localises to the cell membrane. The catalysed reaction is ATP + H2O + polyamine-[polyamine-binding protein]Side 1 = ADP + phosphate + polyamineSide 2 + [polyamine-binding protein]Side 1.. Its function is as follows. Part of the ABC transporter complex PotABCD involved in spermidine/putrescine import. Responsible for energy coupling to the transport system. The chain is Spermidine/putrescine import ATP-binding protein PotA from Lactobacillus johnsonii (strain CNCM I-12250 / La1 / NCC 533).